The chain runs to 246 residues: MRIGILTIFPDFVKVIKEYGVIAQAVENNLLQIDIFNLRDFTTDKHKVVDDYAYGGGPGMVMKPEPFFKFFEYYNQMFGKPYVVLTSPQGKTLNNEIAKKLSAQERLLIICGRYEGIDERVMKFVDEEISIGDYVLTGGELPAMVITDVVSRFIPGVVEEESVKNDSFYNDLLDHPHYTRPRNIDGLEVPEVLLSGNHEEIELWRRKESLRKTISKRPDLFLKHQFDEVDKKALLLLFKELIKDAK.

S-adenosyl-L-methionine is bound by residues glycine 112 and 131 to 136 (IGDYVL).

It belongs to the RNA methyltransferase TrmD family. In terms of assembly, homodimer.

The protein localises to the cytoplasm. The catalysed reaction is guanosine(37) in tRNA + S-adenosyl-L-methionine = N(1)-methylguanosine(37) in tRNA + S-adenosyl-L-homocysteine + H(+). In terms of biological role, specifically methylates guanosine-37 in various tRNAs. The protein is tRNA (guanine-N(1)-)-methyltransferase of Fervidobacterium nodosum (strain ATCC 35602 / DSM 5306 / Rt17-B1).